We begin with the raw amino-acid sequence, 417 residues long: 1-deoxy-D-xylulose 5-phosphate reductoisomerase (417 aa).

NADPH-binding residues include T10, G11, S12, I13, G36, R37, N38, and N130. K131 contributes to the 1-deoxy-D-xylulose 5-phosphate binding site. Position 132 (E132) interacts with NADPH. Position 156 (D156) interacts with Mn(2+). 1-deoxy-D-xylulose 5-phosphate-binding residues include S157, E158, S194, and H217. A Mn(2+)-binding site is contributed by E158. G223 provides a ligand contact to NADPH. 1-deoxy-D-xylulose 5-phosphate contacts are provided by S230, N235, K236, and E239. E239 provides a ligand contact to Mn(2+).

It belongs to the DXR family. Requires Mg(2+) as cofactor. The cofactor is Mn(2+).

The catalysed reaction is 2-C-methyl-D-erythritol 4-phosphate + NADP(+) = 1-deoxy-D-xylulose 5-phosphate + NADPH + H(+). It functions in the pathway isoprenoid biosynthesis; isopentenyl diphosphate biosynthesis via DXP pathway; isopentenyl diphosphate from 1-deoxy-D-xylulose 5-phosphate: step 1/6. Catalyzes the NADPH-dependent rearrangement and reduction of 1-deoxy-D-xylulose-5-phosphate (DXP) to 2-C-methyl-D-erythritol 4-phosphate (MEP). The sequence is that of 1-deoxy-D-xylulose 5-phosphate reductoisomerase from Synechococcus sp. (strain CC9902).